A 151-amino-acid polypeptide reads, in one-letter code: Aspartate carbamoyltransferase regulatory chain (151 aa).

Positions 107, 112, 135, and 138 each coordinate Zn(2+).

It belongs to the PyrI family. As to quaternary structure, contains catalytic and regulatory chains. The cofactor is Zn(2+).

Involved in allosteric regulation of aspartate carbamoyltransferase. The polypeptide is Aspartate carbamoyltransferase regulatory chain (Psychromonas ingrahamii (strain DSM 17664 / CCUG 51855 / 37)).